A 250-amino-acid chain; its full sequence is Pyrroloquinoline-quinone synthase (250 aa).

The protein belongs to the PqqC family.

The enzyme catalyses 6-(2-amino-2-carboxyethyl)-7,8-dioxo-1,2,3,4,7,8-hexahydroquinoline-2,4-dicarboxylate + 3 O2 = pyrroloquinoline quinone + 2 H2O2 + 2 H2O + H(+). The protein operates within cofactor biosynthesis; pyrroloquinoline quinone biosynthesis. Ring cyclization and eight-electron oxidation of 3a-(2-amino-2-carboxyethyl)-4,5-dioxo-4,5,6,7,8,9-hexahydroquinoline-7,9-dicarboxylic-acid to PQQ. This is Pyrroloquinoline-quinone synthase from Xanthomonas euvesicatoria pv. vesicatoria (strain 85-10) (Xanthomonas campestris pv. vesicatoria).